Reading from the N-terminus, the 196-residue chain is Nucleoid occlusion factor SlmA (196 aa).

An HTH tetR-type domain is found at 7–68 (SNRREEILQA…GLIEFIEEAL (62 aa)). A DNA-binding region (H-T-H motif) is located at residues 31–50 (TTVKLAKQVGVSEAALYRHF). Positions 65 to 142 (EEALMSRINR…QLRQILRERK (78 aa)) form a coiled coil.

This sequence belongs to the nucleoid occlusion factor SlmA family. In terms of assembly, homodimer. Interacts with FtsZ.

Its subcellular location is the cytoplasm. The protein localises to the nucleoid. Functionally, required for nucleoid occlusion (NO) phenomenon, which prevents Z-ring formation and cell division over the nucleoid. Acts as a DNA-associated cell division inhibitor that binds simultaneously chromosomal DNA and FtsZ, and disrupts the assembly of FtsZ polymers. SlmA-DNA-binding sequences (SBS) are dispersed on non-Ter regions of the chromosome, preventing FtsZ polymerization at these regions. The polypeptide is Nucleoid occlusion factor SlmA (Vibrio atlanticus (strain LGP32) (Vibrio splendidus (strain Mel32))).